The following is a 746-amino-acid chain: Protein Niban 2 (746 aa).

Gly2 carries the N-myristoyl glycine lipid modification. In terms of domain architecture, PH spans 68–192 (RIVFSGNLFQ…WQAVLQDCIR (125 aa)). Ser568, Ser574, Ser601, and Ser603 each carry phosphoserine. Residues 590-746 (GEEYSNSGGG…EDSAGVQTEF (157 aa)) form a disordered region. Thr606 is subject to Phosphothreonine. Residues Ser609, Ser624, Ser638, Ser641, Ser646, Ser665, Ser681, Ser692, and Ser696 each carry the phosphoserine modification. Residues 671-693 (PLLNGAPAGESPQPKAAPEASSP) are compositionally biased toward low complexity. Over residues 720 to 746 (GEQVSSPSSHPALHTTTEDSAGVQTEF) the composition is skewed to polar residues.

The protein belongs to the Niban family. Phosphorylated at Ser-641, Ser-646, Ser-692 and Ser-696 by the BRAF/MKK/ERK signaling cascade. In melanoma cells, the C-terminal phosphorylation may prevent targeting to the plasma membrane. In terms of processing, as apoptosis proceeds, degraded via an proteasome-independent pathway, probably by caspases.

The protein resides in the cytoplasm. It localises to the cytosol. It is found in the cell junction. The protein localises to the adherens junction. Its subcellular location is the membrane. Its function is as follows. May play a role in apoptosis suppression. May promote melanoma cell invasion in vitro. The sequence is that of Protein Niban 2 from Homo sapiens (Human).